The following is a 359-amino-acid chain: Ferredoxin--NADP reductase (359 aa).

The FAD site is built by Asp48, Gln56, Tyr61, Ala101, Phe139, Asp304, and Ser345.

This sequence belongs to the ferredoxin--NADP reductase type 2 family. Homodimer. FAD is required as a cofactor.

The catalysed reaction is 2 reduced [2Fe-2S]-[ferredoxin] + NADP(+) + H(+) = 2 oxidized [2Fe-2S]-[ferredoxin] + NADPH. In Ralstonia pickettii (strain 12J), this protein is Ferredoxin--NADP reductase.